A 598-amino-acid polypeptide reads, in one-letter code: Aspartate--tRNA(Asp/Asn) ligase (598 aa).

An L-aspartate-binding site is contributed by Glu174. The aspartate stretch occupies residues 198–201; it reads QQLK. Arg220 provides a ligand contact to L-aspartate. Residues 220–222 and Gln229 each bind ATP; that span reads RDE. Residue His458 participates in L-aspartate binding. An ATP-binding site is contributed by Glu492. L-aspartate is bound at residue Arg499. 544 to 547 contacts ATP; that stretch reads GIDR.

This sequence belongs to the class-II aminoacyl-tRNA synthetase family. Type 1 subfamily. As to quaternary structure, homodimer.

It is found in the cytoplasm. It carries out the reaction tRNA(Asx) + L-aspartate + ATP = L-aspartyl-tRNA(Asx) + AMP + diphosphate. Functionally, aspartyl-tRNA synthetase with relaxed tRNA specificity since it is able to aspartylate not only its cognate tRNA(Asp) but also tRNA(Asn). Reaction proceeds in two steps: L-aspartate is first activated by ATP to form Asp-AMP and then transferred to the acceptor end of tRNA(Asp/Asn). The polypeptide is Aspartate--tRNA(Asp/Asn) ligase (Dehalococcoides mccartyi (strain ATCC BAA-2266 / KCTC 15142 / 195) (Dehalococcoides ethenogenes (strain 195))).